Reading from the N-terminus, the 276-residue chain is Ribosomal RNA small subunit methyltransferase A (276 aa).

Residues Asn-24, Leu-26, Gly-51, Glu-72, Asp-97, and Asn-118 each coordinate S-adenosyl-L-methionine.

This sequence belongs to the class I-like SAM-binding methyltransferase superfamily. rRNA adenine N(6)-methyltransferase family. RsmA subfamily.

The protein localises to the cytoplasm. It carries out the reaction adenosine(1518)/adenosine(1519) in 16S rRNA + 4 S-adenosyl-L-methionine = N(6)-dimethyladenosine(1518)/N(6)-dimethyladenosine(1519) in 16S rRNA + 4 S-adenosyl-L-homocysteine + 4 H(+). In terms of biological role, specifically dimethylates two adjacent adenosines (A1518 and A1519) in the loop of a conserved hairpin near the 3'-end of 16S rRNA in the 30S particle. May play a critical role in biogenesis of 30S subunits. This Clostridium acetobutylicum (strain ATCC 824 / DSM 792 / JCM 1419 / IAM 19013 / LMG 5710 / NBRC 13948 / NRRL B-527 / VKM B-1787 / 2291 / W) protein is Ribosomal RNA small subunit methyltransferase A.